The chain runs to 593 residues: UvrABC system protein C (593 aa).

A GIY-YIG domain is found at 14–91 (DSPGCYLHKD…IQENMPKYNI (78 aa)). One can recognise a UVR domain in the interval 196–231 (NKIVNGLTEKMKSAAMTMEFERAAEYRDLIEAISLL).

It belongs to the UvrC family. In terms of assembly, interacts with UvrB in an incision complex.

It is found in the cytoplasm. In terms of biological role, the UvrABC repair system catalyzes the recognition and processing of DNA lesions. UvrC both incises the 5' and 3' sides of the lesion. The N-terminal half is responsible for the 3' incision and the C-terminal half is responsible for the 5' incision. This Streptococcus agalactiae serotype Ia (strain ATCC 27591 / A909 / CDC SS700) protein is UvrABC system protein C.